A 375-amino-acid polypeptide reads, in one-letter code: Zinc finger CCCH domain-containing protein 57 (375 aa).

5 C3H1-type zinc fingers span residues 42–70, 87–115, 133–161, 243–271, and 289–317; these read RHGE…HPHD, RIGQ…HPRN, RPNE…HPQT, RPGQ…HPRD, and RPGE…HPMR. A disordered region spans residues 352–375; the sequence is SVEAKPTSLPETTSAKDTIVDAQH.

It localises to the nucleus. This is Zinc finger CCCH domain-containing protein 57 (ZFN3) from Arabidopsis thaliana (Mouse-ear cress).